Here is a 279-residue protein sequence, read N- to C-terminus: Succinate dehydrogenase [ubiquinone] iron-sulfur subunit 1, mitochondrial (279 aa).

The N-terminal 28 residues, 1 to 28 (MASGLIGRLVGTKPSKLATAARLIPARW), are a transit peptide targeting the mitochondrion. Residues 52-141 (FQIYRWNPDN…ETTITPLPHM (90 aa)) enclose the 2Fe-2S ferredoxin-type domain. The [2Fe-2S] cluster site is built by Cys102, Cys107, and Cys122. The 4Fe-4S ferredoxin-type domain maps to 184 to 214 (DRAKLDGMYECILCACCSTSCPSYWWNPESY). Residues Cys194, Cys197, and Cys200 each coordinate [4Fe-4S] cluster. Residue Cys204 coordinates [3Fe-4S] cluster. Residue Trp209 coordinates a ubiquinone. The [3Fe-4S] cluster site is built by Cys251 and Cys257. Cys261 is a binding site for [4Fe-4S] cluster.

The protein belongs to the succinate dehydrogenase/fumarate reductase iron-sulfur protein family. As to quaternary structure, component of complex II composed of eight subunits in plants: four classical SDH subunits SDH1, SDH2, SDH3 and SDH4 (a flavoprotein (FP), an iron-sulfur protein (IP), and a cytochrome b composed of a large and a small subunit.), as well as four subunits unknown in mitochondria from bacteria and heterotrophic eukaryotes. [2Fe-2S] cluster serves as cofactor. The cofactor is [3Fe-4S] cluster. Requires [4Fe-4S] cluster as cofactor. As to expression, ubiquitous. Preferentially expressed in flowers and inflorescences.

Its subcellular location is the mitochondrion inner membrane. The enzyme catalyses a quinone + succinate = fumarate + a quinol. It participates in carbohydrate metabolism; tricarboxylic acid cycle; fumarate from succinate (eukaryal route): step 1/1. Its function is as follows. Iron-sulfur protein (IP) subunit of succinate dehydrogenase (SDH) that is involved in complex II of the mitochondrial electron transport chain and is responsible for transferring electrons from succinate to ubiquinone (coenzyme Q). This chain is Succinate dehydrogenase [ubiquinone] iron-sulfur subunit 1, mitochondrial (SDH2-1), found in Arabidopsis thaliana (Mouse-ear cress).